The following is a 180-amino-acid chain: Putative manganese efflux pump MntP (180 aa).

The next 6 membrane-spanning stretches (helical) occupy residues 1–21 (MLSV…ISIT), 34–54 (ILWY…IGYV), 63–83 (ISTY…LNMI), 103–123 (VTLL…TFAI), 129–149 (VIPC…GIFI), and 160–180 (KFQI…LLGF).

It belongs to the MntP (TC 9.B.29) family.

The protein localises to the cell membrane. Functionally, probably functions as a manganese efflux pump. The chain is Putative manganese efflux pump MntP from Methanosphaera stadtmanae (strain ATCC 43021 / DSM 3091 / JCM 11832 / MCB-3).